Here is a 955-residue protein sequence, read N- to C-terminus: 2-oxoglutarate dehydrogenase E1 component (955 aa).

The protein belongs to the alpha-ketoglutarate dehydrogenase family. Homodimer. Part of the 2-oxoglutarate dehydrogenase (OGDH) complex composed of E1 (2-oxoglutarate dehydrogenase), E2 (dihydrolipoamide succinyltransferase) and E3 (dihydrolipoamide dehydrogenase); the complex contains multiple copies of the three enzymatic components (E1, E2 and E3). Thiamine diphosphate is required as a cofactor.

It carries out the reaction N(6)-[(R)-lipoyl]-L-lysyl-[protein] + 2-oxoglutarate + H(+) = N(6)-[(R)-S(8)-succinyldihydrolipoyl]-L-lysyl-[protein] + CO2. In terms of biological role, E1 component of the 2-oxoglutarate dehydrogenase (OGDH) complex which catalyzes the decarboxylation of 2-oxoglutarate, the first step in the conversion of 2-oxoglutarate to succinyl-CoA and CO(2). The protein is 2-oxoglutarate dehydrogenase E1 component of Bacillus cereus (strain ATCC 10987 / NRS 248).